The sequence spans 340 residues: Ketol-acid reductoisomerase (NADP(+)) (340 aa).

Residues 3-182 (VQMEYEKDVK…GAARVGLLET (180 aa)) enclose the KARI N-terminal Rossmann domain. Residues 26 to 29 (YGSQ), R49, S53, and 83 to 86 (DEIQ) contribute to the NADP(+) site. Residue H108 is part of the active site. G134 is an NADP(+) binding site. A KARI C-terminal knotted domain is found at 183 to 328 (TYKEETEEDL…AELRKAMPFV (146 aa)). Residues D191, E195, E227, and E231 each coordinate Mg(2+). S252 serves as a coordination point for substrate.

This sequence belongs to the ketol-acid reductoisomerase family. Mg(2+) is required as a cofactor.

The catalysed reaction is (2R)-2,3-dihydroxy-3-methylbutanoate + NADP(+) = (2S)-2-acetolactate + NADPH + H(+). The enzyme catalyses (2R,3R)-2,3-dihydroxy-3-methylpentanoate + NADP(+) = (S)-2-ethyl-2-hydroxy-3-oxobutanoate + NADPH + H(+). It functions in the pathway amino-acid biosynthesis; L-isoleucine biosynthesis; L-isoleucine from 2-oxobutanoate: step 2/4. The protein operates within amino-acid biosynthesis; L-valine biosynthesis; L-valine from pyruvate: step 2/4. Involved in the biosynthesis of branched-chain amino acids (BCAA). Catalyzes an alkyl-migration followed by a ketol-acid reduction of (S)-2-acetolactate (S2AL) to yield (R)-2,3-dihydroxy-isovalerate. In the isomerase reaction, S2AL is rearranged via a Mg-dependent methyl migration to produce 3-hydroxy-3-methyl-2-ketobutyrate (HMKB). In the reductase reaction, this 2-ketoacid undergoes a metal-dependent reduction by NADPH to yield (R)-2,3-dihydroxy-isovalerate. The polypeptide is Ketol-acid reductoisomerase (NADP(+)) (Streptococcus pneumoniae (strain Hungary19A-6)).